A 171-amino-acid polypeptide reads, in one-letter code: I (171 aa).

2 disordered regions span residues 57–100 (IQYP…LFAQ) and 143–171 (PRTS…KRRA). Residues 151-162 (EFKRGGGRERLP) show a composition bias toward basic and acidic residues.

Belongs to the Orthorubulavirus I protein family.

This chain is I, found in Mumps virus genotype N (strain L-Zagreb vaccine) (MuV).